The following is a 122-amino-acid chain: Large ribosomal subunit protein uL14 (122 aa).

This sequence belongs to the universal ribosomal protein uL14 family. In terms of assembly, part of the 50S ribosomal subunit. Forms a cluster with proteins L3 and L19. In the 70S ribosome, L14 and L19 interact and together make contacts with the 16S rRNA in bridges B5 and B8.

Its function is as follows. Binds to 23S rRNA. Forms part of two intersubunit bridges in the 70S ribosome. The polypeptide is Large ribosomal subunit protein uL14 (Rhodococcus jostii (strain RHA1)).